We begin with the raw amino-acid sequence, 284 residues long: Probable endonuclease 4 (284 aa).

Histidine 69, histidine 109, glutamate 145, aspartate 179, histidine 182, histidine 216, aspartate 229, histidine 231, and glutamate 261 together coordinate Zn(2+).

It belongs to the AP endonuclease 2 family. It depends on Zn(2+) as a cofactor.

The enzyme catalyses Endonucleolytic cleavage to 5'-phosphooligonucleotide end-products.. In terms of biological role, endonuclease IV plays a role in DNA repair. It cleaves phosphodiester bonds at apurinic or apyrimidinic (AP) sites, generating a 3'-hydroxyl group and a 5'-terminal sugar phosphate. The chain is Probable endonuclease 4 from Chlorobium phaeobacteroides (strain BS1).